The sequence spans 328 residues: ATP-dependent 6-phosphofructokinase (328 aa).

Gly11 serves as a coordination point for ATP. 21 to 25 (RAAVR) lines the ADP pocket. Residues 72 to 73 (RS) and 102 to 105 (GNGT) contribute to the ATP site. Asn103 is a Mg(2+) binding site. 126 to 128 (TID) is a binding site for substrate. Asp128 functions as the Proton acceptor in the catalytic mechanism. An ADP-binding site is contributed by Arg155. Substrate-binding positions include Arg163 and 170 to 172 (MGR). Residues 186–188 (GAE) and 214–216 (KAS) contribute to the ADP site. Substrate is bound by residues Glu223, Arg247, and 253–256 (HVQR).

It belongs to the phosphofructokinase type A (PFKA) family. ATP-dependent PFK group I subfamily. Prokaryotic clade 'B1' sub-subfamily. As to quaternary structure, homotetramer. It depends on Mg(2+) as a cofactor.

It localises to the cytoplasm. It catalyses the reaction beta-D-fructose 6-phosphate + ATP = beta-D-fructose 1,6-bisphosphate + ADP + H(+). Its pathway is carbohydrate degradation; glycolysis; D-glyceraldehyde 3-phosphate and glycerone phosphate from D-glucose: step 3/4. With respect to regulation, allosterically activated by ADP and other diphosphonucleosides, and allosterically inhibited by phosphoenolpyruvate. In terms of biological role, catalyzes the phosphorylation of D-fructose 6-phosphate to fructose 1,6-bisphosphate by ATP, the first committing step of glycolysis. The polypeptide is ATP-dependent 6-phosphofructokinase (Cytophaga hutchinsonii (strain ATCC 33406 / DSM 1761 / CIP 103989 / NBRC 15051 / NCIMB 9469 / D465)).